Reading from the N-terminus, the 130-residue chain is Blasticidin-S deaminase (130 aa).

Residues 1 to 129 (MPLSQEESTL…ELLPSGYMNR (129 aa)) form the CMP/dCMP-type deaminase domain. Position 28 (serine 28) interacts with substrate. Cysteine 54 is a binding site for Zn(2+). The active-site Proton donor is glutamate 56. Substrate is bound at residue arginine 82. Residues cysteine 88 and cysteine 91 each contribute to the Zn(2+) site. Position 126 (tyrosine 126) interacts with substrate.

The protein belongs to the cytidine and deoxycytidylate deaminase family. As to quaternary structure, homotetramer. It depends on Zn(2+) as a cofactor.

The enzyme catalyses blasticidin S + H2O + H(+) = deaminohydroxyblasticidin S + NH4(+). Functionally, catalyzes the deamination of the cytosine moiety of the antibiotics blasticidin S, cytomycin and acetylblasticidin S. In Aspergillus terreus (strain NIH 2624 / FGSC A1156), this protein is Blasticidin-S deaminase (bsd).